Reading from the N-terminus, the 407-residue chain is Peptidase T (407 aa).

His-82 lines the Zn(2+) pocket. The active site involves Asp-84. Residue Asp-143 participates in Zn(2+) binding. The active-site Proton acceptor is the Glu-177. The Zn(2+) site is built by Glu-178, Asp-200, and His-382.

It belongs to the peptidase M20B family. The cofactor is Zn(2+).

It localises to the cytoplasm. The enzyme catalyses Release of the N-terminal residue from a tripeptide.. Cleaves the N-terminal amino acid of tripeptides. This Streptococcus uberis (strain ATCC BAA-854 / 0140J) protein is Peptidase T.